The chain runs to 400 residues: Chalcone synthase WHP1 (400 aa).

Residue Cys167 is part of the active site.

It belongs to the thiolase-like superfamily. Chalcone/stilbene synthases family.

It carries out the reaction (E)-4-coumaroyl-CoA + 3 malonyl-CoA + 3 H(+) = 2',4,4',6'-tetrahydroxychalcone + 3 CO2 + 4 CoA. It functions in the pathway secondary metabolite biosynthesis; flavonoid biosynthesis. Its function is as follows. The primary product of this enzyme is 4,2',4',6'-tetrahydroxychalcone (also termed naringenin-chalcone or chalcone) which can under specific conditions spontaneously isomerize into naringenin. The chain is Chalcone synthase WHP1 (WHP1) from Zea mays (Maize).